Consider the following 330-residue polypeptide: Malate dehydrogenase (330 aa).

Position 13–19 (13–19 (GAAGQIG)) interacts with NAD(+). Arg94 and Arg100 together coordinate substrate. NAD(+)-binding positions include Asn107, Gln114, and 131 to 133 (VGN). Residues Asn133 and Arg164 each coordinate substrate. His189 (proton acceptor) is an active-site residue.

Belongs to the LDH/MDH superfamily. MDH type 2 family.

The enzyme catalyses (S)-malate + NAD(+) = oxaloacetate + NADH + H(+). Functionally, catalyzes the reversible oxidation of malate to oxaloacetate. The protein is Malate dehydrogenase of Deinococcus deserti (strain DSM 17065 / CIP 109153 / LMG 22923 / VCD115).